A 909-amino-acid polypeptide reads, in one-letter code: Zinc finger and BTB domain-containing protein 41 (909 aa).

The 65-residue stretch at 88–152 (CDLLIIVEGK…LYTSEFFVYK (65 aa)) folds into the BTB domain. The C2H2-type 1 zinc finger occupies 207 to 230 (HQCKFCSRHFCYKKSLENHLAKTH). The interval 252–344 (RSKRNRKCPV…PEAGDSVGNV (93 aa)) is disordered. Acidic residues predominate over residues 266-275 (TSDDEQESGD). Basic and acidic residues predominate over residues 284-295 (NFDKEKSDRNDS). Positions 296–322 (EDPGSEYNAEEDELEEEMSDEYSDIEE) are enriched in acidic residues. 13 consecutive C2H2-type zinc fingers follow at residues 361–383 (LQCP…TRVH), 389–411 (FECD…RKKH), 422–445 (HKCP…KRFH), 463–485 (WKCD…MILH), 491–514 (FKCT…EKFH), 518–541 (FPCD…ECTH), 547–569 (WTCF…LRIH), 575–597 (HLCS…LRVH), 603–625 (YECD…KKIH), 631–654 (HQCE…KSVH), 668–690 (HQCD…FRTH), 696–718 (YKCQ…LVIH), and 724–747 (FNCQ…DHVH).

The protein resides in the nucleus. In terms of biological role, may be involved in transcriptional regulation. This Homo sapiens (Human) protein is Zinc finger and BTB domain-containing protein 41 (ZBTB41).